A 294-amino-acid polypeptide reads, in one-letter code: BOI-related E3 ubiquitin-protein ligase 1 (294 aa).

The tract at residues 168–204 (LQERVKNLYVENQIWRDLAQTNEATANNLRSNLEQVL) is WRD domain. Positions 183 to 212 (RDLAQTNEATANNLRSNLEQVLAQVDDLDA) form a coiled coil. The segment at 244–281 (CKRCGELTASVLVLPCRHLCLCTVCGSSALLRTCPVCD) adopts an RING-type zinc-finger fold.

In terms of assembly, interacts with the DELLA proteins GAI, RGA, RGL1, RGL2 and RGL3.

It catalyses the reaction S-ubiquitinyl-[E2 ubiquitin-conjugating enzyme]-L-cysteine + [acceptor protein]-L-lysine = [E2 ubiquitin-conjugating enzyme]-L-cysteine + N(6)-ubiquitinyl-[acceptor protein]-L-lysine.. Its pathway is protein degradation; proteasomal ubiquitin-dependent pathway. In terms of biological role, E3 ubiquitin-protein ligase involved in regulation of abiotic stress responses. Not involved in ubiquitination of MYB108/BOS1. Has no effect on the stability of the DELLA proteins. This is BOI-related E3 ubiquitin-protein ligase 1 (BRG1) from Arabidopsis thaliana (Mouse-ear cress).